A 160-amino-acid polypeptide reads, in one-letter code: Invasion protein IagB (160 aa).

The signal sequence occupies residues 1-19; it reads MHYFFIIVIWLLSINTAWA.

This sequence belongs to the IagB/IpgF/P19 family.

This chain is Invasion protein IagB (iagB), found in Salmonella typhi.